Here is a 630-residue protein sequence, read N- to C-terminus: Beta-phellandrene synthase, chloroplastic (630 aa).

The transit peptide at 1–48 (MALVSSAPKSCLHKSLIRSTHHELKPLRRTIPTLGMCRRGKSFTPSVS) directs the protein to the chloroplast. Residues Asp381, Asp385, and Asp533 each coordinate Mg(2+). The DDXXD motif signature appears at 381-385 (DDIYD).

It belongs to the terpene synthase family. Tpsd subfamily. It depends on Mg(2+) as a cofactor. Mn(2+) serves as cofactor. K(+) is required as a cofactor.

It is found in the plastid. The protein localises to the chloroplast. The enzyme catalyses (2E)-geranyl diphosphate = (-)-beta-phellandrene + diphosphate. The protein operates within terpene metabolism; oleoresin biosynthesis. In terms of biological role, converts geranyl diphosphate to four products with (-)-(4S)-beta-phellandrene (52%) as the major olefin, and lesser amounts of (-)-(1S,5S)-beta-pinene (34%), (-)-1S,5S-alpha-pinene (8.5%), and (-)-(4S)-limonene (6%). Involved in defensive oleoresin formation in conifers in response to insect attack or other injury. Involved in monoterpene (C10) olefins biosynthesis. The protein is Beta-phellandrene synthase, chloroplastic (ag8) of Abies grandis (Grand fir).